The following is a 130-amino-acid chain: Small ribosomal subunit protein uS11 (130 aa).

Belongs to the universal ribosomal protein uS11 family. As to quaternary structure, part of the 30S ribosomal subunit. Interacts with proteins S7 and S18. Binds to IF-3.

In terms of biological role, located on the platform of the 30S subunit, it bridges several disparate RNA helices of the 16S rRNA. Forms part of the Shine-Dalgarno cleft in the 70S ribosome. This Prochlorococcus marinus (strain MIT 9211) protein is Small ribosomal subunit protein uS11.